We begin with the raw amino-acid sequence, 173 residues long: C-phycocyanin beta subunit (173 aa).

Residue N73 is modified to N4-methylasparagine. The (2R,3E)-phycocyanobilin site is built by C83 and C154.

It belongs to the phycobiliprotein family. Heterodimer of an alpha and a beta subunit. Part of 2 PBS rod complexes, the conventional PBS rod and a photosystem I-specific CpcL-PBS rod. In terms of processing, contains two covalently linked bilin chromophores.

It localises to the cellular thylakoid membrane. In terms of biological role, light-harvesting photosynthetic bile pigment-protein from the phycobiliprotein complex (phycobilisome, PBS). Phycocyanin is the major phycobiliprotein in the PBS rod. The polypeptide is C-phycocyanin beta subunit (cpcB) (Nostoc sp. (strain PCC 7120 / SAG 25.82 / UTEX 2576)).